Consider the following 93-residue polypeptide: Probable endoribonuclease MazF1 (93 aa).

Belongs to the PemK/MazF family. In terms of assembly, forms a complex with cognate antitoxin MazE1.

Its function is as follows. Toxic component of a type II toxin-antitoxin (TA) system, its cognate antitoxin is MazE1. Probably an endoribonuclease. In Mycobacterium tuberculosis (strain ATCC 25618 / H37Rv), this protein is Probable endoribonuclease MazF1 (mazF1).